A 1026-amino-acid chain; its full sequence is Multidrug resistance protein MdtC (1026 aa).

At 1–6 (MRFFAL) the chain is on the cytoplasmic side. Residues 7-29 (FIYRPVATILIAAAITLCGILGF) traverse the membrane as a helical segment. The Periplasmic portion of the chain corresponds to 30–335 (RLLPVAPLPQ…TIRASLQEVE (306 aa)). The helical transmembrane segment at 336-353 (ETLAISVALVILVVFLFL) threads the bilayer. The Cytoplasmic portion of the chain corresponds to 354 to 359 (RSGRAT). Residues 360 to 379 (LIPAVAVPVSLIGTFAAMYL) form a helical membrane-spanning segment. The Periplasmic segment spans residues 380-388 (CGFSLNNLS). Residues 389-411 (LMALTIATGFVVDDAIVVLENIA) traverse the membrane as a helical segment. Residues 412-430 (RHLEARMKPLQAALQGTRE) are Cytoplasmic-facing. The chain crosses the membrane as a helical span at residues 431 to 453 (VGFTVISMSLSLVAVFLPLLLMG). Residues 454–467 (GLPGRLLREFAVTL) lie on the Periplasmic side of the membrane. Residues 468 to 490 (SVAIGISLVVSLTLTPMMCGWML) traverse the membrane as a helical segment. The Cytoplasmic segment spans residues 491–852 (KSSKPRTQPR…QVFQQTMNSQ (362 aa)). A helical membrane pass occupies residues 853–875 (LILIVAAIATVYIVLGILYESYV). Residues 876–894 (HPLTILSTLPSAGVGALLA) are Periplasmic-facing. The helical transmembrane segment at 895–917 (LELFNAPFSLIALIGIMLLIGIV) threads the bilayer. Residues 918 to 947 (KKNAIMMVDFALEAQRSGGLTPEQAIFQAC) are Cytoplasmic-facing. Residues 948–970 (LLRFRPIMMTTLAALFGALPLVL) form a helical membrane-spanning segment. The Periplasmic portion of the chain corresponds to 971-984 (SGGDGSELRQPLGI). Residues 985–1007 (TIVGGLVMSQLLTLYTTPVVYLF) form a helical membrane-spanning segment. Topologically, residues 1008–1026 (FDRLRLRFSRKNSKPVVEI) are cytoplasmic.

The protein belongs to the resistance-nodulation-cell division (RND) (TC 2.A.6) family. MdtC subfamily. As to quaternary structure, part of a tripartite efflux system composed of MdtA, MdtB and MdtC. MdtC forms a heteromultimer with MdtB.

It localises to the cell inner membrane. The protein is Multidrug resistance protein MdtC of Salmonella typhi.